We begin with the raw amino-acid sequence, 580 residues long: Viral transcription factor IE2 (580 aa).

The span at 1-11 (MESSAKRKMDP) shows a compositional bias: basic and acidic residues. Disordered stretches follow at residues 1 to 30 (MESSAKRKMDPDNPDEGPSSKVPRPETPVT) and 99 to 161 (DSSS…VIIK). A compositionally biased stretch (polar residues) spans 99–133 (DSSSTGPTLTTHSCSVSSAPLNKPTPTSVAVTNTP). Residues Lys175 and Lys180 each participate in a glycyl lysine isopeptide (Lys-Gly) (interchain with G-Cter in SUMO) cross-link. The SUMO-interacting motif 1/SIM1 signature appears at 199–202 (CIVI). The segment at 200–208 (IVISDSEEE) is non-covalent SUMO1 binding region (SIM). Ser203 and Ser205 each carry phosphoserine. The tract at residues 206–336 (EEEQGEEVET…SKRISELDNE (131 aa)) is disordered. Low complexity-rich tracts occupy residues 216-236 (RGATASSPSTGSGTPRVTSPT), 259-271 (SSSSSSSCSSASD), and 302-317 (AASSSLLSCGHQSSGG). The short motif at 410–413 (IQII) is the SUMO-interacting motif 1/SIM2 element. Positions 501–504 (VDLL) match the SUMO-interacting motif 1/SIM3 motif.

Belongs to the HHV-5 IE2 protein family. Interacts with host SUMO-modified form of TATA-binding protein (TBP)-associated factor 12/TAF12 in a SIM-dependent manner; this interaction increases the transactivation activity of IE2. Interacts with host CHAF1A. Interacts with several components of the host transcriptional machinery including TBP, TF2B and CREB1. Interacts with host DNA replication licensing factor MCM3. Interacts with host PLSCR1; this interaction inhibits IE2 transactivating activity. Post-translationally, phosphorylated by host CK2 at Ser-203 and Ser-205; leading to enhanced SUMOylation. In terms of processing, SUMOylated; SUMOylation is enhanced when IE2 is phosphorylated by host CK2. The sumoylation is necessary for efficient replication of the virus and thus for the function of this viral transcription factor.

Its subcellular location is the host nucleus. Its function is as follows. Stimulates viral early and late gene expression and thus play a crucial role in the regulation of productive infection. Selectively drives host RNA Pol II transcription initiation at a subset of viral early-late and late promoters without substantially affecting Pol II transcription of expressed host genes. Mechanistically, forms a repressive complex at the major immediate-early promoter region involving direct association with host nucleosomes and TBP. Concerning activation, stimulates transcription by binding nearby, but not within, core promoter regions. In addition, activates quiescent cells to reenter the cell cycle and up-regulates several E2F-responsive genes, which are responsible for pushing the cell into S phase. In S-phase, inhibits cellular DNA synthesis and blocks further cell cycle progression. This Homo sapiens (Human) protein is Viral transcription factor IE2 (UL122).